The chain runs to 483 residues: Scarecrow-like protein 26 (483 aa).

The GRAS domain occupies 95–477 (KTDESKGLRL…RRLVSASFWA (383 aa)). Positions 102–165 (LRLVHLLVAA…SKLLERDSVL (64 aa)) are leucine repeat I (LRI). The interval 184–251 (FELLQNMSPY…PSAQHLRITA (68 aa)) is VHIID. Positions 215–219 (IHIVD) match the VHIID motif. The leucine repeat II (LRII) stretch occupies residues 267–299 (ETGRRLTAFADSIGQPFSYQHCKLDTNAFSTSS). A PFYRE region spans residues 308–400 (VVINCMLHLP…RVFIGPWVAN (93 aa)). The segment at 403–477 (TRITANDAEV…RRLVSASFWA (75 aa)) is SAW.

This sequence belongs to the GRAS family. Expressed in seedlings, roots, leaves and flowers.

The protein localises to the nucleus. Probable transcription factor involved in plant development. In Arabidopsis thaliana (Mouse-ear cress), this protein is Scarecrow-like protein 26 (SCL26).